The primary structure comprises 363 residues: 3-dehydroquinate synthase (363 aa).

NAD(+)-binding positions include 109–113 (GASTD), 133–134 (TT), Lys146, and Lys155. Residues Glu188, His251, and His267 each contribute to the Zn(2+) site.

This sequence belongs to the sugar phosphate cyclases superfamily. Dehydroquinate synthase family. NAD(+) serves as cofactor. Requires Co(2+) as cofactor. Zn(2+) is required as a cofactor.

It is found in the cytoplasm. It carries out the reaction 7-phospho-2-dehydro-3-deoxy-D-arabino-heptonate = 3-dehydroquinate + phosphate. It participates in metabolic intermediate biosynthesis; chorismate biosynthesis; chorismate from D-erythrose 4-phosphate and phosphoenolpyruvate: step 2/7. Functionally, catalyzes the conversion of 3-deoxy-D-arabino-heptulosonate 7-phosphate (DAHP) to dehydroquinate (DHQ). The protein is 3-dehydroquinate synthase of Streptomyces coelicolor (strain ATCC BAA-471 / A3(2) / M145).